The sequence spans 48 residues: Large ribosomal subunit protein bL33B (48 aa).

It belongs to the bacterial ribosomal protein bL33 family.

This is Large ribosomal subunit protein bL33B (rpmG2) from Mycoplasma genitalium (strain ATCC 33530 / DSM 19775 / NCTC 10195 / G37) (Mycoplasmoides genitalium).